Here is a 324-residue protein sequence, read N- to C-terminus: tRNA U34 carboxymethyltransferase (324 aa).

Carboxy-S-adenosyl-L-methionine is bound by residues K91, W105, K110, G130, 152-154 (DPS), 181-182 (IE), M196, Y200, and R315.

The protein belongs to the class I-like SAM-binding methyltransferase superfamily. CmoB family. Homotetramer.

The enzyme catalyses carboxy-S-adenosyl-L-methionine + 5-hydroxyuridine(34) in tRNA = 5-carboxymethoxyuridine(34) in tRNA + S-adenosyl-L-homocysteine + H(+). In terms of biological role, catalyzes carboxymethyl transfer from carboxy-S-adenosyl-L-methionine (Cx-SAM) to 5-hydroxyuridine (ho5U) to form 5-carboxymethoxyuridine (cmo5U) at position 34 in tRNAs. In Aliivibrio fischeri (strain ATCC 700601 / ES114) (Vibrio fischeri), this protein is tRNA U34 carboxymethyltransferase.